The chain runs to 133 residues: Lanmodulin (133 aa).

A signal peptide spans 1–21 (MAFRLSSAVLLAALVAAPAYA). Nd(3+)-binding residues include aspartate 35, aspartate 37, aspartate 39, threonine 41, glutamate 46, aspartate 59, aspartate 61, aspartate 63, threonine 65, glutamate 70, aspartate 84, aspartate 86, aspartate 88, threonine 90, glutamate 95, asparagine 108, aspartate 110, aspartate 112, threonine 114, and glutamate 119. EF-hand domains are found at residues 35-46 (DPDKDGTIDLKE), 59-70 (DPDKDGTLDAKE), 84-95 (DPDNDGTLDKKE), and 108-119 (NPDNDGTIDARE).

As to quaternary structure, monomer.

It is found in the periplasm. Functionally, high-affinity lanthanide (Ln)-binding protein. Shows 100 million-fold selectivity for La(3+) over Ca(2+). Binds 3 equiv of Ln(3+) with picomolar affinity and a fourth with approximately micromolar affinity. May be involved in receiving and then transporting lanthanides (such as La(3+), Nd(3+) and Sm(3+)) to a specific periplasmic destination. This Methylorubrum extorquens (strain ATCC 14718 / DSM 1338 / JCM 2805 / NCIMB 9133 / AM1) (Methylobacterium extorquens) protein is Lanmodulin.